The following is a 355-amino-acid chain: Chemerin-like receptor 2 (355 aa).

Residues 1–41 (MEDLEETLFEEFENYSYALDYYSLESDLEEKVQLGVVHWVS) lie on the Extracellular side of the membrane. The N-linked (GlcNAc...) asparagine glycan is linked to Asn-14. The helical transmembrane segment at 42-62 (LVLYCLSFVLGIPGNAIVIWF) threads the bilayer. Over 63-73 (TGFKWKRTVST) the chain is Cytoplasmic. Residues 74–94 (LWFLNLAIADFIFLLFLPLYI) form a helical membrane-spanning segment. Residues 95 to 112 (SYVVMNFHWPFGIWLCKA) are Extracellular-facing. An intrachain disulfide couples Cys-110 to Cys-187. The helical transmembrane segment at 113-133 (NSFTAQLNMFASVFFLTVISL) threads the bilayer. At 134–154 (DHYIHLIHPVLSHRHRTLKNS) the chain is on the cytoplasmic side. A helical transmembrane segment spans residues 155 to 175 (LIVIIFIWLLASLIGGPALYF). Topologically, residues 176–210 (RDTVEFNNHTLCYNNFQKHDPDLTVIRHHVLTWVK) are extracellular. Residues 211–231 (YIVGYLFPLLTMSICYLCLIL) form a helical membrane-spanning segment. Residues 232–247 (KVKKRSILISSRHFWT) are Cytoplasmic-facing. A helical transmembrane segment spans residues 248-268 (ILAVVVAFVVCWTPYHLFSIW). Over 269 to 286 (ELTIHHNSYSHHVMQAGI) the chain is Extracellular. The chain crosses the membrane as a helical span at residues 287–307 (PLSTGLAFLNSCLNPILYVLI). Residues 308-355 (SKKFQARFRSSVAEILKYTLWEVSCSGTVSEQLRNSETKNLCLLETAQ) are Cytoplasmic-facing.

The protein belongs to the chemokine-like receptor (CMKLR) family.

The protein localises to the cell membrane. In terms of biological role, receptor for chemoattractant adipokine chemerin/RARRES2 suggesting a role for this receptor in the regulation of inflammation and energy homesotasis. Signals mainly via beta-arrestin pathway. Binding of RARRES2 activates weakly G proteins, calcium mobilization and MAPK1/MAPK3 (ERK1/2) phosphorylation too. Acts also as a receptor for TAFA1, mediates its effects on neuronal stem-cell proliferation and differentiation via the activation of ROCK/ERK and ROCK/STAT3 signaling pathway. This Macaca fascicularis (Crab-eating macaque) protein is Chemerin-like receptor 2 (CMKLR2).